We begin with the raw amino-acid sequence, 309 residues long: Porphobilinogen deaminase (309 aa).

Position 241 is an S-(dipyrrolylmethanemethyl)cysteine (C241).

The protein belongs to the HMBS family. In terms of assembly, monomer. Dipyrromethane serves as cofactor.

It carries out the reaction 4 porphobilinogen + H2O = hydroxymethylbilane + 4 NH4(+). It functions in the pathway porphyrin-containing compound metabolism; protoporphyrin-IX biosynthesis; coproporphyrinogen-III from 5-aminolevulinate: step 2/4. In terms of biological role, tetrapolymerization of the monopyrrole PBG into the hydroxymethylbilane pre-uroporphyrinogen in several discrete steps. The protein is Porphobilinogen deaminase of Geobacillus kaustophilus (strain HTA426).